A 465-amino-acid chain; its full sequence is Probable zinc metalloprotease PTT_17836 (465 aa).

Positions 1–20 (MRSASTLAVCAATLLQIACS) are cleaved as a signal peptide. A glycan (N-linked (GlcNAc...) asparagine) is linked at N140. 3 residues coordinate Zn(2+): H163, D183, and E216. A glycan (N-linked (GlcNAc...) asparagine) is linked at N231. D243 lines the Zn(2+) pocket. N272, N330, N378, N384, N421, and N426 each carry an N-linked (GlcNAc...) asparagine glycan. The Fibronectin type-III domain maps to 371–464 (APTNVGVNTT…LPFPFGCARN (94 aa)).

It belongs to the peptidase M28 family. M28B subfamily. Zn(2+) is required as a cofactor.

It localises to the secreted. The polypeptide is Probable zinc metalloprotease PTT_17836 (Pyrenophora teres f. teres (strain 0-1) (Barley net blotch fungus)).